The following is a 377-amino-acid chain: Phytanoyl-CoA hydroxylase-interacting protein-like (377 aa).

The Fibronectin type-III domain occupies 52–161 (VPQNIKISNI…EINEFCTADY (110 aa)).

Belongs to the PHYHIP family.

Its function is as follows. May play a role in the development of the central system. This Danio rerio (Zebrafish) protein is Phytanoyl-CoA hydroxylase-interacting protein-like (phyhipl).